A 292-amino-acid polypeptide reads, in one-letter code: Homoserine kinase (292 aa).

An ATP-binding site is contributed by 84–94; sequence PLSRGLGSSSA.

Belongs to the GHMP kinase family. Homoserine kinase subfamily.

It is found in the cytoplasm. It carries out the reaction L-homoserine + ATP = O-phospho-L-homoserine + ADP + H(+). The protein operates within amino-acid biosynthesis; L-threonine biosynthesis; L-threonine from L-aspartate: step 4/5. Functionally, catalyzes the ATP-dependent phosphorylation of L-homoserine to L-homoserine phosphate. The protein is Homoserine kinase of Campylobacter jejuni subsp. doylei (strain ATCC BAA-1458 / RM4099 / 269.97).